The sequence spans 414 residues: Histidine--tRNA ligase (414 aa).

The protein belongs to the class-II aminoacyl-tRNA synthetase family. Homodimer.

Its subcellular location is the cytoplasm. It carries out the reaction tRNA(His) + L-histidine + ATP = L-histidyl-tRNA(His) + AMP + diphosphate + H(+). The chain is Histidine--tRNA ligase from Endomicrobium trichonymphae.